A 91-amino-acid chain; its full sequence is UPF0512 protein M (91 aa).

Belongs to the UPF0512 family.

In Dictyostelium discoideum (Social amoeba), this protein is UPF0512 protein M.